The chain runs to 289 residues: Bifunctional protein FolD (289 aa).

Residues 165-167 (GAS) and Ser-190 contribute to the NADP(+) site.

The protein belongs to the tetrahydrofolate dehydrogenase/cyclohydrolase family. In terms of assembly, homodimer.

It carries out the reaction (6R)-5,10-methylene-5,6,7,8-tetrahydrofolate + NADP(+) = (6R)-5,10-methenyltetrahydrofolate + NADPH. The catalysed reaction is (6R)-5,10-methenyltetrahydrofolate + H2O = (6R)-10-formyltetrahydrofolate + H(+). It functions in the pathway one-carbon metabolism; tetrahydrofolate interconversion. Catalyzes the oxidation of 5,10-methylenetetrahydrofolate to 5,10-methenyltetrahydrofolate and then the hydrolysis of 5,10-methenyltetrahydrofolate to 10-formyltetrahydrofolate. The polypeptide is Bifunctional protein FolD (Ralstonia pickettii (strain 12J)).